The following is a 198-amino-acid chain: MAEKESTKRNRREEILQALAQMLESSDGSQRITTAKLAANVGVSEAALYRHFPSKTRMFDSLIEFIEDSLTTRINLILQDEKETFNRLRLILLLILGFAERNPGLTRIMTGHALMFEQDRLQDRINQLFERIESQLRQVLREHKLRDGKGFQHDETLLASQLLAFCEGMLSRFIRSEFRYRPTQEFDTRWPLLAAQLN.

Residues 9-70 enclose the HTH tetR-type domain; the sequence is RNRREEILQA…SLIEFIEDSL (62 aa). The H-T-H motif DNA-binding region spans 33–52; sequence TTAKLAANVGVSEAALYRHF. Residues 113 to 144 are a coiled coil; that stretch reads ALMFEQDRLQDRINQLFERIESQLRQVLREHK.

This sequence belongs to the nucleoid occlusion factor SlmA family. Homodimer. Interacts with FtsZ.

Its subcellular location is the cytoplasm. The protein resides in the nucleoid. In terms of biological role, required for nucleoid occlusion (NO) phenomenon, which prevents Z-ring formation and cell division over the nucleoid. Acts as a DNA-associated cell division inhibitor that binds simultaneously chromosomal DNA and FtsZ, and disrupts the assembly of FtsZ polymers. SlmA-DNA-binding sequences (SBS) are dispersed on non-Ter regions of the chromosome, preventing FtsZ polymerization at these regions. The protein is Nucleoid occlusion factor SlmA of Pectobacterium carotovorum subsp. carotovorum (strain PC1).